Consider the following 151-residue polypeptide: UPF0178 protein Desal_2673 (151 aa).

This sequence belongs to the UPF0178 family.

This is UPF0178 protein Desal_2673 from Maridesulfovibrio salexigens (strain ATCC 14822 / DSM 2638 / NCIMB 8403 / VKM B-1763) (Desulfovibrio salexigens).